A 493-amino-acid chain; its full sequence is Tripartite motif-containing protein 5 (493 aa).

At A2 the chain carries N-acetylalanine. An RING-type zinc finger spans residues 15–59 (CPICLELLTQPLSLDCGHSFCQACLTANHEKSMLDKGESSCPVCR). S86 is modified (phosphoserine). The segment at 90 to 132 (QKVDHCARHGEKLLLFCQEDGKVICWLCERSQEHRGHHTFLTE) adopts a B box-type zinc-finger fold. Zn(2+)-binding residues include C95, H98, C117, and H123. Positions 131–240 (TEEVAQECQV…LISDLEHRLQ (110 aa)) form a coiled coil. The tract at residues 185 to 198 (FEQLRDILDWEESN) is required for interaction with GABARAP and for autophagy. Residues 281 to 493 (LKGMLEVFRE…VPMTLCSPSS (213 aa)) form the B30.2/SPRY domain.

The protein belongs to the TRIM/RBCC family. As to quaternary structure, can form homodimers and homotrimers. In addition to lower-order dimerization, also exhibits a higher-order multimerization and both low- and high-order multimerizations are essential for its restriction activity. Interacts with BTBD1 and BTBD2. Interacts with PSMC4, PSMC5, PSMD7 and HSPA8/HSC70. Interacts (via B30.2/SPRY domain) with HSPA1A/B. Interacts with PSMC2, MAP3K7/TAK1, TAB2 and TAB3. Interacts with SQSTM1. Interacts with TRIM6 and TRIM34. Interacts with ULK1 (phosphorylated form), GABARAP, GABARAPL1, GABARAPL2, MAP1LC3A, MAP1LC3C and BECN1. Post-translationally, degraded in a proteasome-independent fashion in the absence of viral infection but in a proteasome-dependent fashion following exposure to restriction sensitive virus. In terms of processing, autoubiquitinated in a RING finger- and UBE2D2-dependent manner. Monoubiquitinated by TRIM21. Deubiquitinated by Yersinia YopJ. Ubiquitination may not lead to proteasomal degradation.

It is found in the cytoplasm. It localises to the nucleus. It carries out the reaction S-ubiquitinyl-[E2 ubiquitin-conjugating enzyme]-L-cysteine + [acceptor protein]-L-lysine = [E2 ubiquitin-conjugating enzyme]-L-cysteine + N(6)-ubiquitinyl-[acceptor protein]-L-lysine.. The protein operates within protein modification; protein ubiquitination. Its function is as follows. Capsid-specific restriction factor that prevents infection from non-host-adapted retroviruses. Blocks viral replication early in the life cycle, after viral entry but before reverse transcription. In addition to acting as a capsid-specific restriction factor, also acts as a pattern recognition receptor that activates innate immune signaling in response to the retroviral capsid lattice. Binding to the viral capsid triggers its E3 ubiquitin ligase activity, and in concert with the heterodimeric ubiquitin conjugating enzyme complex UBE2V1-UBE2N (also known as UBC13-UEV1A complex) generates 'Lys-63'-linked polyubiquitin chains, which in turn are catalysts in the autophosphorylation of the MAP3K7/TAK1 complex (includes TAK1, TAB2, and TAB3). Activation of the MAP3K7/TAK1 complex by autophosphorylation results in the induction and expression of NF-kappa-B and MAPK-responsive inflammatory genes, thereby leading to an innate immune response in the infected cell. Plays a role in regulating autophagy through activation of autophagy regulator BECN1 by causing its dissociation from its inhibitors BCL2 and TAB2. This is Tripartite motif-containing protein 5 (TRIM5) from Gorilla gorilla gorilla (Western lowland gorilla).